The chain runs to 48 residues: Gas vesicle protein A (48 aa).

The protein belongs to the gas vesicle GvpA family. In terms of assembly, the gas vesicle shell is 2 nm thick and consists of a single layer of this protein. It forms helical ribs nearly perpendicular to the long axis of the vesicle.

The protein localises to the gas vesicle shell. In terms of biological role, gas vesicles are hollow, gas filled proteinaceous nanostructures found in some microorganisms. During planktonic growth they allow positioning of the organism at a favorable depth for light or nutrient acquisition. GvpA forms the protein shell. This Spirulina sp. (strain CCAP 1475/10) protein is Gas vesicle protein A.